The following is a 610-amino-acid chain: MPEAPTAKTAPAYGYAPGAHAEALEFIEHVTANAGQVQRRVLGEILAQNAPAEYLRRYGIPGSPDVVDAFRRLVPLVTYEGLQPDILRIANGDTSPIFSGKPISEFLTSSGTSGGERKLMPTIADEMNRRSLLYSLLMPVMSQSVSGLDKGKAMYLLFVKAESRTPGGLAARPVLTSYYRSRQFLDRPRDPYTSYTSPDEAILCVDSYQSMYAQLLCGLVHRADVLRVGAVFASGFLRAIHFLEKHWARLCHDIRTGELDPEITDRVVRDAVGRVLRADPALADAIEDECARASWEGIIRRLWPRTKYIDVIVTGTMSQYIPTLEFYGGGLPLTCTMYASSECYFGLNLNPMCKPSDVAYTLIPTMCYYEFLPVNCNNATAEASHRDLVDLVDVKLGHEYELVVTTYSGLYRYRVGDVLRVAGFKNKAPMFSFVRRQNVALSVDSDKTDETELHAAVSGAVQHLAPFGASLVEYTSYADAATIPGHYVLFWELRAGSTAVPASVFEECCLSVEEALNSVYRQGRACDRSIGPLEIRVVAEGTFDKLMDYAISRGASINQYKAPRCVRPGPVVELLDARVQGKYFSPKCPKWSPGNKQWNKSKDLVGKGDA.

It belongs to the IAA-amido conjugating enzyme family. Expressed in flowers.

Its function is as follows. May catalyze the synthesis of indole-3-acetic acid (IAA)-amino acid conjugates, providing a mechanism for the plant to cope with the presence of excess auxin. The protein is Probable indole-3-acetic acid-amido synthetase GH3.1 (GH3.1) of Oryza sativa subsp. japonica (Rice).